Here is a 329-residue protein sequence, read N- to C-terminus: MENLEALTEEAIELVNCANDLAALDTVRVNYLGKKGPLTALRKTLGKLSAEERPVVGAKINEAVARVQEQLNQKKAALELAAINTKLASETIDVTLEGRRNEVGGLHPVTRTLDRIERIFSNVGYKVEQGPEIEDNYHNFDALNIPAHHPARAMHDTFYVDEDRVLRTHTSPVQVRTMENQQPPIYIICPGRVYRCDSDQTHTPMFHQVEGLVVDKNVSFADLKGTIVDFLRVFFEKDDLEVRFRPSFFPFTEPSAEFDIQWASSKTGWLEVGGCGMVHPNVLRASGVDPEVYTGFAFGLGVERLAMLRYGVNDLRLFFENDLDFLKQF.

A Mg(2+)-binding site is contributed by E253.

It belongs to the class-II aminoacyl-tRNA synthetase family. Phe-tRNA synthetase alpha subunit type 1 subfamily. Tetramer of two alpha and two beta subunits. Mg(2+) is required as a cofactor.

It is found in the cytoplasm. The catalysed reaction is tRNA(Phe) + L-phenylalanine + ATP = L-phenylalanyl-tRNA(Phe) + AMP + diphosphate + H(+). This Teredinibacter turnerae (strain ATCC 39867 / T7901) protein is Phenylalanine--tRNA ligase alpha subunit.